The primary structure comprises 1054 residues: Reverse gyrase (1054 aa).

The RG N-terminal-type zinc finger occupies 1–43 (MIPVVYSNLCPVCGGDLESKEIEKHVCFRKKRSLCLFPEDFLL). Residues Cys-10, Cys-13, Cys-27, and Cys-35 each coordinate Zn(2+). Cys-35 and Cys-650 are disulfide-bonded. Positions 61, 84, 85, and 86 each coordinate ATP. A Helicase ATP-binding domain is found at 65–245 (AKRILRKESF…FRQLLNFDIG (181 aa)). The DEAD box motif lies at 182-185 (DDVD). Residues 352 to 427 (PSFRVTIEDI…EGEVIFPDLR (76 aa)) are latch region. The tract at residues 502-1054 (DLIKPALFIV…DLYAEIKSID (553 aa)) is topoisomerase I. A Toprim domain is found at 506 to 662 (PALFIVESPT…VKRAEFHEVT (157 aa)). Residue Glu-512 coordinates Mg(2+). The RG C-terminal-type zinc finger occupies 581 to 609 (IKRCRDCGYQFTEDRESCPKCGSENVDNS). Zn(2+) contacts are provided by Cys-584, Cys-587, Cys-598, and Cys-601. Residue Asp-631 coordinates Mg(2+). A Topo IA-type catalytic domain is found at 677 to 1054 (DENLVKAQVV…DLYAEIKSID (378 aa)). Tyr-809 acts as the O-(5'-phospho-DNA)-tyrosine intermediate in catalysis.

In the N-terminal section; belongs to the DEAD box helicase family. DDVD subfamily. This sequence in the C-terminal section; belongs to the type IA topoisomerase family. As to quaternary structure, monomer. Zn(2+) serves as cofactor. The cofactor is Mg(2+).

It localises to the cytoplasm. The enzyme catalyses ATP + H2O = ADP + phosphate + H(+). In terms of biological role, modifies the topological state of DNA by introducing positive supercoils in an ATP-dependent process, increasing the linking number in steps of +1. Very efficient supercoiling occurs on relaxed DNA with a single-stranded bubble; the minimal bubble is 20 nucleotides (nt) and up to 10 positive supercoils can be introduced into a 3.1 kb plasmid with a 50 nt bubble. Positively supercoils DNA with all (d)NTPS, although it requires about 10-fold more of non-(d)ATP. In the absence of ATP (or at low levels of enzyme), or in the presence of ADP, relaxes negative supercoils. Only relaxes positive supercoils when the substrate contains a bubble. Also promotes strand annealing of complementary ssDNA circles. Binds to single-stranded DNA, transiently cleaves and then rejoins the ends, introducing a positive supercoil in the process. The scissile phosphodiester is attacked by the catalytic tyrosine of the enzyme, resulting in the formation of a DNA-(5'-phosphotyrosyl)-enzyme intermediate. Probably involved in rewinding DNA strands in regions of the chromosome that have opened up to allow replication, transcription, DNA repair and/or for DNA protection. In vitro protects DNA against degradation at 90 degrees Celsius, reducing dsDNA breakage about 8-fold; ATP hydrolysis is not necessary, while ADP decreases the protection somewhat. Coats all forms of dsDNA; the DNA is protected against cleavage and transcription. Recognizes nicked DNA and forms a coat at the nicking site, which may help hold DNA in a structure amenable to repair. This chain is Reverse gyrase, found in Archaeoglobus fulgidus (strain ATCC 49558 / DSM 4304 / JCM 9628 / NBRC 100126 / VC-16).